The chain runs to 84 residues: Small ribosomal subunit protein uS17 (84 aa).

The protein belongs to the universal ribosomal protein uS17 family. In terms of assembly, part of the 30S ribosomal subunit.

Functionally, one of the primary rRNA binding proteins, it binds specifically to the 5'-end of 16S ribosomal RNA. This Clostridium botulinum (strain ATCC 19397 / Type A) protein is Small ribosomal subunit protein uS17.